The primary structure comprises 62 residues: Phyllokinin-1 (62 aa).

The first 19 residues, methionine 1 to serine 19, serve as a signal peptide directing secretion. A propeptide spanning residues serine 20–glutamate 48 is cleaved from the precursor. A disordered region spans residues cysteine 22–tyrosine 62. Residues glutamate 30 to serine 42 show a composition bias toward acidic residues. Residues glutamate 43–arginine 52 show a composition bias toward basic and acidic residues. Residue tyrosine 62 is modified to Sulfotyrosine; partial.

Belongs to the frog skin active peptide (FSAP) family. Bradykinin-related peptide subfamily. In terms of processing, asp,Pro,Glu-[Thr6,Val10]-phyllokinin and [Thr6,Val10]-phyllokinin occur in sulfated and nonsulfated forms. [Thr6]-bradykinin and Des-Arg-[Thr6]-bradykinin are nonsulfated. Expressed by the skin glands.

Its subcellular location is the secreted. Inhibits ACE with a Ki of 1.6 uM, and targets B2 bradykinin receptor (BDKRB2). Provokes contraction of smooth muscle preparation (ileum). In vivo, induces an early hyperalgesic effects in living rats after intraplantar injection. The protein is Phyllokinin-1 of Pithecopus azureus (Orange-legged monkey tree frog).